Here is a 262-residue protein sequence, read N- to C-terminus: Flap endonuclease Xni (262 aa).

Residue aspartate 105 participates in Mg(2+) binding. A 5'-3' exonuclease domain is found at 164–251 (SQFLDLMALA…NINLKDFRAN (88 aa)). 5 residues coordinate K(+): leucine 172, alanine 173, proline 181, isoleucine 183, and isoleucine 186. The tract at residues 185 to 190 (GIGPKS) is interaction with DNA.

Belongs to the Xni family. The cofactor is Mg(2+). K(+) is required as a cofactor.

In terms of biological role, has flap endonuclease activity. During DNA replication, flap endonucleases cleave the 5'-overhanging flap structure that is generated by displacement synthesis when DNA polymerase encounters the 5'-end of a downstream Okazaki fragment. The sequence is that of Flap endonuclease Xni from Shewanella sp. (strain W3-18-1).